A 354-amino-acid chain; its full sequence is GTPase Obg (354 aa).

The region spanning 1-159 is the Obg domain; it reads MKFVDEVKIH…RDLVLELKLL (159 aa). In terms of domain architecture, OBG-type G spans 160–333; that stretch reads ADVGIVGYPN…LLDAVGRALF (174 aa). Residues 166 to 173, 191 to 195, 212 to 215, 283 to 286, and 314 to 316 contribute to the GTP site; these read GYPNAGKS, FTTLT, DIPG, TKID, and SAV. Ser173 and Thr193 together coordinate Mg(2+).

It belongs to the TRAFAC class OBG-HflX-like GTPase superfamily. OBG GTPase family. As to quaternary structure, monomer. It depends on Mg(2+) as a cofactor.

The protein localises to the cytoplasm. An essential GTPase which binds GTP, GDP and possibly (p)ppGpp with moderate affinity, with high nucleotide exchange rates and a fairly low GTP hydrolysis rate. Plays a role in control of the cell cycle, stress response, ribosome biogenesis and in those bacteria that undergo differentiation, in morphogenesis control. The polypeptide is GTPase Obg (Anaeromyxobacter dehalogenans (strain 2CP-C)).